The chain runs to 459 residues: Probable PTS system sucrose-specific EIIBC component (459 aa).

A PTS EIIB type-1 domain is found at 1 to 86 (MHKEIAKELL…VHVWETAPSE (86 aa)). C25 (phosphocysteine intermediate; for EIIB activity) is an active-site residue. In terms of domain architecture, PTS EIIC type-1 spans 106-459 (KTLSDIFVPI…LFLGFKEETE (354 aa)). The next 11 helical transmembrane spans lie at 111–131 (IFVP…LIGM), 147–167 (MLDL…GFSA), 177–197 (LGAV…SMLG), 209–229 (LHIP…SVFV), 245–265 (LDVV…ALIV), 288–308 (AGIA…LSGL), 329–349 (FLVP…LAVF), 360–380 (IALP…VFGV), 388–408 (FIGA…VQVV), 412–432 (YGLT…ANFV), and 434–454 (YMIG…FLGF).

The protein localises to the cell membrane. Functionally, the phosphoenolpyruvate-dependent sugar phosphotransferase system (sugar PTS), a major carbohydrate active -transport system, catalyzes the phosphorylation of incoming sugar substrates concomitantly with their translocation across the cell membrane. This system may be involved in sucrose transport. The EIIB domain is mainly phosphorylated by the EIIA domains of GamP and PtsA/YpqE. Its function is as follows. Negatively regulates SacY activity by catalyzing its phosphorylation on 'His-99'. In Bacillus subtilis (strain 168), this protein is Probable PTS system sucrose-specific EIIBC component (sacX).